The primary structure comprises 186 residues: Ribosome-recycling factor (186 aa).

The protein belongs to the RRF family.

Its subcellular location is the cytoplasm. In terms of biological role, responsible for the release of ribosomes from messenger RNA at the termination of protein biosynthesis. May increase the efficiency of translation by recycling ribosomes from one round of translation to another. This chain is Ribosome-recycling factor, found in Burkholderia mallei (strain NCTC 10247).